Here is a 282-residue protein sequence, read N- to C-terminus: NADPH-dependent 7-cyano-7-deazaguanine reductase (282 aa).

Residue 88-90 (IES) participates in substrate binding. 90 to 91 (SK) contributes to the NADPH binding site. The Thioimide intermediate role is filled by Cys190. Residue Asp197 is the Proton donor of the active site. 229 to 230 (HE) provides a ligand contact to substrate. 258-259 (RG) provides a ligand contact to NADPH.

Belongs to the GTP cyclohydrolase I family. QueF type 2 subfamily. As to quaternary structure, homodimer.

Its subcellular location is the cytoplasm. It catalyses the reaction 7-aminomethyl-7-carbaguanine + 2 NADP(+) = 7-cyano-7-deazaguanine + 2 NADPH + 3 H(+). Its pathway is tRNA modification; tRNA-queuosine biosynthesis. Its function is as follows. Catalyzes the NADPH-dependent reduction of 7-cyano-7-deazaguanine (preQ0) to 7-aminomethyl-7-deazaguanine (preQ1). This chain is NADPH-dependent 7-cyano-7-deazaguanine reductase, found in Escherichia coli O9:H4 (strain HS).